Reading from the N-terminus, the 259-residue chain is Leucine-rich repeat-containing protein 3B (259 aa).

Residues 1–33 (MNLVDLWLSRSLSMCLLLQSFVLMILCFHSASM) form the signal peptide. In terms of domain architecture, LRRNT spans 34-64 (CPKGCLCSSSGGLNVTCSNANLKEIPRDLPP). Asparagine 47 is a glycosylation site (N-linked (GlcNAc...) asparagine). LRR repeat units lie at residues 65–86 (ETVL…IFKD), 89–110 (QLRV…AFKG), and 114–135 (TLQT…AFNN). Asparagine 94 carries an N-linked (GlcNAc...) asparagine glycan. The LRRCT domain maps to 145–197 (NPWHCDCTLQQVLRSMASNHETAHNVICKTSVLDEHAGRPFLNAANDADLCNL). A helical membrane pass occupies residues 205 to 225 (AMLVTMFGWFTMVISYVVYYV).

Belongs to the LRRC3 family.

It localises to the membrane. The polypeptide is Leucine-rich repeat-containing protein 3B (Lrrc3b) (Mus musculus (Mouse)).